The sequence spans 632 residues: U-box domain-containing protein 14 (632 aa).

The U-box domain occupies 247–321 (VIPEYFRCPI…ALWCESNGIE (75 aa)). ARM repeat units lie at residues 377 to 416 (VDNR…NLSI), 418 to 457 (EGNK…SLSV), 459 to 498 (DENK…NLCI), 500 to 539 (QGNK…ILST), and 541 to 580 (QEGK…YLCI).

As to quaternary structure, homodimer. Interacts with SNL1. Binds to SD11, SD16, SD17, SD18, SD113, SD129 and SD25. In terms of tissue distribution, expressed in flowers, green siliques, seeds and rosette leaves.

The enzyme catalyses S-ubiquitinyl-[E2 ubiquitin-conjugating enzyme]-L-cysteine + [acceptor protein]-L-lysine = [E2 ubiquitin-conjugating enzyme]-L-cysteine + N(6)-ubiquitinyl-[acceptor protein]-L-lysine.. It functions in the pathway protein modification; protein ubiquitination. Functions as an E3 ubiquitin ligase with specific E2 ubiquitin-conjugating enzymes. Undergoes auto-ubiquitination. In Arabidopsis thaliana (Mouse-ear cress), this protein is U-box domain-containing protein 14 (PUB14).